Here is a 138-residue protein sequence, read N- to C-terminus: 10 kDa chaperonin 1, chloroplastic (138 aa).

The transit peptide at 1-61 (MASSFITVPK…VPQADRVLVR (61 aa)) directs the protein to the chloroplast. The segment at 50 to 137 (KVVPQADRVL…CKESDLLAIV (88 aa)) is cpn-10 domain.

This sequence belongs to the GroES chaperonin family. In terms of tissue distribution, expressed at low levels in germinating seeds, seedlings, rosettes leaves, flowers and siliques.

Its subcellular location is the plastid. The protein resides in the chloroplast. In terms of biological role, functions as a co-chaperone for protein folding in chloroplasts. The sequence is that of 10 kDa chaperonin 1, chloroplastic from Arabidopsis thaliana (Mouse-ear cress).